The sequence spans 134 residues: Small ribosomal subunit protein uS8c (134 aa).

This sequence belongs to the universal ribosomal protein uS8 family. Part of the 30S ribosomal subunit.

The protein localises to the plastid. Its subcellular location is the chloroplast. Its function is as follows. One of the primary rRNA binding proteins, it binds directly to 16S rRNA central domain where it helps coordinate assembly of the platform of the 30S subunit. In Phaseolus angularis (Azuki bean), this protein is Small ribosomal subunit protein uS8c (rps8).